A 183-amino-acid polypeptide reads, in one-letter code: NADH dehydrogenase [ubiquinone] iron-sulfur protein 4, mitochondrial (183 aa).

A mitochondrion-targeting transit peptide spans 1-28; it reads MSALRQVMCRSTASLQLYQANRAAAARW. Residue serine 181 is modified to Phosphoserine.

This sequence belongs to the complex I NDUFS4 subunit family.

The protein localises to the mitochondrion inner membrane. Accessory subunit of the mitochondrial membrane respiratory chain NADH dehydrogenase (Complex I), that is believed not to be involved in catalysis. Complex I functions in the transfer of electrons from NADH to the respiratory chain. The immediate electron acceptor for the enzyme is believed to be ubiquinone. The protein is NADH dehydrogenase [ubiquinone] iron-sulfur protein 4, mitochondrial of Drosophila melanogaster (Fruit fly).